We begin with the raw amino-acid sequence, 598 residues long: Pentatricopeptide repeat-containing protein At1g09900 (598 aa).

PPR repeat units follow at residues 101–135 (EDVESNNHLRQMVRTGELEEGFKFLENMVYHGNVP), 136–170 (DIIPCTTLIRGFCRLGKTRKAAKILEILEGSGAVP), 171–201 (DVITYNVMISGYCKAGEINNALSVLDRMSVS), 203–237 (DVVTYNTILRSLCDSGKLKQAMEVLDRMLQRDCYP), 238–272 (DVITYTILIEATCRDSGVGHAMKLLDEMRDRGCTP), 273–307 (DVVTYNVLVNGICKEGRLDEAIKFLNDMPSSGCQP), 308–342 (NVITHNIILRSMCSTGRWMDAEKLLADMLRKGFSP), 343–377 (SVVTFNILINFLCRKGLLGRAIDILEKMPQHGCQP), 378–412 (NSLSYNPLLHGFCKEKKMDRAIEYLERMVSRGCYP), 413–447 (DIVTYNTMLTALCKDGKVEDAVEILNQLSSKGCSP), 448–482 (VLITYNTVIDGLAKAGKTGKAIKLLDEMRAKDLKP), 483–517 (DTITYSSLVGGLSREGKVDEAIKFFHEFERMGIRP), 518–552 (NAVTFNSIMLGLCKSRQTDRAIDFLVFMINRGCKP), and 553–587 (NETSYTILIEGLAYEGMAKEALELLNELCNKGLMK).

It belongs to the PPR family. P subfamily.

The protein is Pentatricopeptide repeat-containing protein At1g09900 of Arabidopsis thaliana (Mouse-ear cress).